Here is a 60-residue protein sequence, read N- to C-terminus: Large ribosomal subunit protein bL32 (60 aa).

The tract at residues 1–47 (MAVQQNRKTRSKRGMRRSHDALTSSTLSTDPTTGEKHRRHHVTADGF) is disordered. The span at 7–16 (RKTRSKRGMR) shows a compositional bias: basic residues.

It belongs to the bacterial ribosomal protein bL32 family.

The chain is Large ribosomal subunit protein bL32 from Teredinibacter turnerae (strain ATCC 39867 / T7901).